The primary structure comprises 276 residues: Pyridinium-3,5-bisthiocarboxylic acid mononucleotide synthase (276 aa).

Residue Cys-176 is the Nucleophile and sulfur donor of the active site. Cys-176 is modified (2,3-didehydroalanine (Cys)).

The protein belongs to the LarE family.

It catalyses the reaction pyridinium-3,5-dicarboxylate mononucleotide + [LarE protein]-L-cysteine + ATP = [LarE protein]-dehydroalanine + pyridinium-3-carboxylate-5-thiocarboxylate mononucleotide + AMP + diphosphate + H(+). The catalysed reaction is [LarE protein]-L-cysteine + pyridinium-3-carboxylate-5-thiocarboxylate mononucleotide + ATP = pyridinium-3,5-bisthiocarboxylate mononucleotide + [LarE protein]-dehydroalanine + AMP + diphosphate + H(+). Involved in the biosynthesis of a nickel-pincer cofactor ((SCS)Ni(II) pincer complex). Catalyzes the ATP-dependent incorporation of two sulfur atoms in pyridinium-3,5-biscarboxylic acid mononucleotide (P2CMN) to yield pyridinium-3,5-bisthiocarboxylic acid mononucleotide (P2TMN). The source of sulfur is the enzyme itself: Cys-176 of LarE is the sulfur donor, thereby being converted into dehydroalanine, and is not regenerated in vivo. Thus, two molecules of LarE undergo sacrificial sulfur transfer to create one P2TMN. Binds nickel. Is required for the activation of the lactate racemase LarA. May also be involved in the activation of other nickel-pincer cofactor-dependent enzymes. This chain is Pyridinium-3,5-bisthiocarboxylic acid mononucleotide synthase, found in Lactiplantibacillus plantarum (strain ATCC BAA-793 / NCIMB 8826 / WCFS1) (Lactobacillus plantarum).